The primary structure comprises 501 residues: DEAD-box ATP-dependent RNA helicase 20 (501 aa).

2 stretches are compositionally biased toward basic and acidic residues: residues 1–20 and 38–53; these read MSRY…RRSD and SKKD…KLDL. The interval 1-53 is disordered; the sequence is MSRYDSRTGDSTSYRDRRSDSGFGGTSSYGSSGSHTSSKKDNDGNESPRKLDL. The Q motif signature appears at 99-127; sequence KSFRDVGFPDYVLEEVKKAGFTEPTPIQS. Positions 130–305 constitute a Helicase ATP-binding domain; it reads WPMAMKGRDL…KKFLYNPYKV (176 aa). ATP is bound at residue 143–150; it reads AETGSGKT. The short motif at 253–256 is the DEAD box element; the sequence is DEAD. A Helicase C-terminal domain is found at 333–478; sequence KLVKLLEDIM…KVSPELASMG (146 aa). The tract at residues 473–501 is disordered; it reads ELASMGRSTAPPPPGLGGFRDRGSRRGWS. The span at 491–501 shows a compositional bias: basic and acidic residues; the sequence is FRDRGSRRGWS.

It belongs to the DEAD box helicase family. DDX5/DBP2 subfamily.

Its subcellular location is the nucleus. The catalysed reaction is ATP + H2O = ADP + phosphate + H(+). ATP-dependent RNA helicase involved nonsense-mediated mRNA decay and ribosome biogenesis through rRNA processing. This Arabidopsis thaliana (Mouse-ear cress) protein is DEAD-box ATP-dependent RNA helicase 20 (RH20).